The primary structure comprises 717 residues: Polyribonucleotide nucleotidyltransferase (717 aa).

Mg(2+)-binding residues include Asp-486 and Asp-492. The region spanning 553–612 is the KH domain; the sequence is PKIVQLQIDIDKISLVIGSTGKTVKAITDEFEVRVQIEQDGRITLFGTDNLKMQKAKAKI. Residues 622–715 form the S1 motif domain; it reads GEIYDGIVKK…KFGKIELELA (94 aa). A disordered region spans residues 650 to 681; the sequence is SNRSRSRDDRYGSDIRHSRYSNRNSRYGRDNR. Positions 654–666 are enriched in basic and acidic residues; that stretch reads RSRDDRYGSDIRH.

The protein belongs to the polyribonucleotide nucleotidyltransferase family. The cofactor is Mg(2+).

The protein resides in the cytoplasm. It carries out the reaction RNA(n+1) + phosphate = RNA(n) + a ribonucleoside 5'-diphosphate. Involved in mRNA degradation. Catalyzes the phosphorolysis of single-stranded polyribonucleotides processively in the 3'- to 5'-direction. In Borrelia duttonii (strain Ly), this protein is Polyribonucleotide nucleotidyltransferase.